The chain runs to 190 residues: GTP cyclohydrolase 1 (190 aa).

Residues C75, H78, and C146 each contribute to the Zn(2+) site.

Belongs to the GTP cyclohydrolase I family. In terms of assembly, homomer.

It catalyses the reaction GTP + H2O = 7,8-dihydroneopterin 3'-triphosphate + formate + H(+). The protein operates within cofactor biosynthesis; 7,8-dihydroneopterin triphosphate biosynthesis; 7,8-dihydroneopterin triphosphate from GTP: step 1/1. This is GTP cyclohydrolase 1 from Campylobacter lari (strain RM2100 / D67 / ATCC BAA-1060).